The following is a 94-amino-acid chain: Evasin P1172 (94 aa).

3 disulfide bridges follow: Cys-35–Cys-54, Cys-39–Cys-56, and Cys-50–Cys-67. N-linked (GlcNAc...) asparagine glycosylation is found at Asn-38, Asn-44, Asn-53, and Asn-80.

It localises to the secreted. Its function is as follows. Salivary chemokine-binding protein which binds to host chemokines CXCL1, CXCL2, CXCL5 and CXCL8. In Ixodes ricinus (Common tick), this protein is Evasin P1172.